Reading from the N-terminus, the 370-residue chain is MMYQEAALLLALLFISSNVVLSAPVRDGLLPNGNFELGPKPSQMKGSVVKERTAVPNWNIIGFVEFIKSGQKQDDMVLVVPQGSSAVRLGNEASISQKISVLPGRLYSITFSAARTCAQDERLNISVTHESGVIPIQTMYGSDGWDSYSWAFKAGGPEIEIRFHNPGVEEHPACGPLIDAVAIKALFPPRFSGYNLIKNGNFEEGPYVFPTAKWGVLIPPFIEDDNSPLPGWMIESLKAVKYVDKAHFAVPEGHRAIELVGGKESAISQIVRTSLNKFYALTFNVGDARDGCEGPMIVEAFAGQGKVMVDYASKGKGGFRRGRLVFKAVSARTRVTFLSTFYHMKSDHSGSLCGPVIDDVRLVAVGKLRG.

An N-terminal signal peptide occupies residues 1–22 (MMYQEAALLLALLFISSNVVLS). The N-linked (GlcNAc...) asparagine glycan is linked to Asn124.

As to expression, expressed at low levels in roots, seedlings and leaves.

It is found in the secreted. The protein resides in the cell wall. The chain is Protein DUF642 L-GALACTONO-1,4-LACTONE-RESPONSIVE GENE 1 from Arabidopsis thaliana (Mouse-ear cress).